Consider the following 580-residue polypeptide: MAGTVRTACLVVAMLLSLDFPGQAQPPPPPPDATCHQVRSFFQRLQPGLKWVPETPVPGSDLQVCLPKGPTCCSRKMEEKYQLTARLNMEQLLQSASMELKFLIIQNAAVFQEAFEIVVRHAKNYTNAMFKNNYPSLTPQAFEFVGEFFTDVSLYILGSDINVDDMVNELFDSLFPVIYTQLMNPGLPDSALDINECLRGARRDLKVFGNFPKLIMTQVSKSLQVTRIFLQALNLGIEVINTTDHLKFSKDCGRMLTRMWYCSYCQGLMMVKPCGGYCNVVMQGCMAGVVEIDKYWREYILSLEELVNGMYRIYDMENVLLGLFSTIHDSIQYVQKNAGKLTTTIGKLCAHSQQRQYRSAYYPEDLFIDKKVLKVAHVEHEETLSSRRRELIQKLKSFISFYSALPGYICSHSPVAENDTLCWNGQELVERYSQKAARNGMKNQFNLHELKMKGPEPVVSQIIDKLKHINQLLRTMSMPKGRVLDKNLDEEGFESGDCGDDEDECIGGSGDGMIKVKNQLRFLAELAYDLDVDDAPGNSQQATPKDNEISTFHNLGNVHSPLKLLTSMAISVVCFFFLVH.

An N-terminal signal peptide occupies residues Met1–Ala24. Residue Gln25 is modified to Pyrrolidone carboxylic acid. Intrachain disulfides connect Cys35–Cys72, Cys65–Cys262, Cys73–Cys265, Cys197–Cys349, Cys252–Cys285, Cys274–Cys422, and Cys278–Cys410. 2 N-linked (GlcNAc...) asparagine glycosylation sites follow: Asn124 and Asn241. Ser352 is subject to Phosphoserine; by FAM20C. N-linked (GlcNAc...) asparagine glycosylation occurs at Asn418. Residues Ser495 and Ser509 are each glycosylated (O-linked (Xyl...) (glycosaminoglycan) serine). Residue Asn554 is the site of GPI-anchor amidated asparagine attachment. A propeptide spans Leu555–His580 (removed in mature form).

This sequence belongs to the glypican family. As to quaternary structure, heterodimer; disulfide-linked. Cleavage by a furin-like convertase results in production of alpha and beta chains which form a disulfide-linked heterodimer. Interacts with DPP4. Interacts with FGF2. Interacts with WNT5A. Also interacts with WNT3A and WNT7B. Interacts with hedgehog protein SHH; the heparan sulfate chains are not required for the interaction. Also interacts with hedgehog protein IHH. Interacts with CD81. Interacts with Wnt receptors FZD4, FZD7 and FZD8; the heparan sulfate chains are required for the interaction. Post-translationally, O-glycosylated; contains heparan sulfate and/or chondroitin sulfate. Cleaved intracellularly by a furin-like convertase to generate 2 subunits, alpha and beta, which remain associated through disulfide bonds and are associated with the cell surface via the GPI-anchor. This processing is essential for its role in inhibition of hedgehog signaling. A second proteolytic event may result in cleavage of the protein on the cell surface, separating it from the GPI-anchor and leading to its shedding from the cell surface. Detected in placenta (at protein level). Highly expressed in lung, liver and kidney.

Its subcellular location is the cell membrane. Its function is as follows. Cell surface proteoglycan. Negatively regulates the hedgehog signaling pathway when attached via the GPI-anchor to the cell surface by competing with the hedgehog receptor PTC1 for binding to hedgehog proteins. Binding to the hedgehog protein SHH triggers internalization of the complex by endocytosis and its subsequent lysosomal degradation. Positively regulates the canonical Wnt signaling pathway by binding to the Wnt receptor Frizzled and stimulating the binding of the Frizzled receptor to Wnt ligands. Positively regulates the non-canonical Wnt signaling pathway. Binds to CD81 which decreases the availability of free CD81 for binding to the transcriptional repressor HHEX, resulting in nuclear translocation of HHEX and transcriptional repression. Inhibits the dipeptidyl peptidase activity of DPP4. Plays a role in limb patterning and skeletal development by controlling the cellular response to BMP4. Modulates the effects of growth factors BMP2, BMP7 and FGF7 on renal branching morphogenesis. Required for coronary vascular development. Plays a role in regulating cell movements during gastrulation. This chain is Glypican-3 (GPC3), found in Homo sapiens (Human).